A 329-amino-acid chain; its full sequence is Cuticle collagen 6 (329 aa).

Triple-helical region stretches follow at residues 142 to 171, 189 to 212, 216 to 248, 253 to 279, and 282 to 320; these read GAAG…NGRD, GAPG…PGEP, GKSG…AGRL, GPQG…DGQS, and GPPG…CGHC. A disordered region spans residues 146–329; sequence PPGPEGPPGN…CPPPRTPPGY (184 aa). Residues 156-173 are compositionally biased toward basic and acidic residues; the sequence is DGKDGRNGNDGKNGRDAE. Residues 187-199 show a composition bias toward low complexity; that stretch reads PTGAPGPMGAMGP. Pro residues predominate over residues 200 to 212; that stretch reads KGPPGPKGSPGEP. Residues 251–272 show a composition bias toward pro residues; it reads VPGPQGAPGKPGPIGPPGPKGN. The span at 273–282 shows a compositional bias: low complexity; the sequence is PGPDGQSYQG. Residues 320–329 are compositionally biased toward pro residues; that stretch reads CPPPRTPPGY.

Belongs to the cuticular collagen family. As to quaternary structure, collagen polypeptide chains are complexed within the cuticle by disulfide bonds and other types of covalent cross-links.

In terms of biological role, nematode cuticles are composed largely of collagen-like proteins. The cuticle functions both as an exoskeleton and as a barrier to protect the worm from its environment. The protein is Cuticle collagen 6 of Caenorhabditis elegans.